The chain runs to 284 residues: Tegument protein UL23 (284 aa).

Belongs to the herpesviridae US22 family. Interacts with host NMI; this interaction inhibits NMI interaction with STAT1.

Its subcellular location is the virion tegument. The protein resides in the host cytoplasm. Its function is as follows. Plays a role in the inhibition of host innate immune response by disrupting the interaction between NMI and STAT1. In turn, NMI-mediated transcription of interferon-gamma stimulated genes is inhibited. The polypeptide is Tegument protein UL23 (UL23) (Homo sapiens (Human)).